We begin with the raw amino-acid sequence, 100 residues long: Nucleoid-associated protein HPG27_32 (100 aa).

Belongs to the YbaB/EbfC family. As to quaternary structure, homodimer.

Its subcellular location is the cytoplasm. The protein localises to the nucleoid. Functionally, binds to DNA and alters its conformation. May be involved in regulation of gene expression, nucleoid organization and DNA protection. In Helicobacter pylori (strain G27), this protein is Nucleoid-associated protein HPG27_32.